The sequence spans 269 residues: BAG family molecular chaperone regulator 4 (269 aa).

Residues 1 to 40 form a disordered region; sequence MMHNSTEESEWEVRPGGMLVQRRDDAASSDHKPLQDPDSA. Residues 21-35 show a composition bias toward basic and acidic residues; the sequence is QRRDDAASSDHKPLQ. The Ubiquitin-like domain occupies 46-122; that stretch reads QTIRITVSHG…LVVVVEDTNK (77 aa). The BAG domain occupies 138–219; it reads AIAAVNAVTG…NLQEAVDKLK (82 aa). A disordered region spans residues 241 to 269; sequence SFGNGVGSLNPPPPASPSANVTQDWEKFD.

Binds to the ATPase domain of HSP70/HSC70 chaperones. Interacts with HSP70-1. As to expression, detected in stems, leaves, flowers and roots.

Functionally, co-chaperone that regulates diverse cellular pathways, such as programmed cell death and stress responses. The protein is BAG family molecular chaperone regulator 4 (BAG4) of Arabidopsis thaliana (Mouse-ear cress).